The primary structure comprises 396 residues: Elongation factor Tu (396 aa).

The region spanning 10-206 (KPHVNVGTIG…ALDSYIPTPE (197 aa)) is the tr-type G domain. Residues 19-26 (GHVDHGKT) are G1. Position 19-26 (19-26 (GHVDHGKT)) interacts with GTP. Residue Thr26 participates in Mg(2+) binding. The tract at residues 60–64 (GITIN) is G2. A G3 region spans residues 81–84 (DCPG). GTP is bound by residues 81-85 (DCPGH) and 136-139 (NKCD). Positions 136-139 (NKCD) are G4. The interval 174-176 (SAL) is G5.

It belongs to the TRAFAC class translation factor GTPase superfamily. Classic translation factor GTPase family. EF-Tu/EF-1A subfamily. Monomer.

It localises to the cytoplasm. It carries out the reaction GTP + H2O = GDP + phosphate + H(+). GTP hydrolase that promotes the GTP-dependent binding of aminoacyl-tRNA to the A-site of ribosomes during protein biosynthesis. This is Elongation factor Tu from Aromatoleum aromaticum (strain DSM 19018 / LMG 30748 / EbN1) (Azoarcus sp. (strain EbN1)).